The following is a 462-amino-acid chain: A-type ATP synthase subunit B (462 aa).

It belongs to the ATPase alpha/beta chains family. In terms of assembly, has multiple subunits with at least A(3), B(3), C, D, E, F, H, I and proteolipid K(x).

Its subcellular location is the cell membrane. In terms of biological role, component of the A-type ATP synthase that produces ATP from ADP in the presence of a proton gradient across the membrane. The B chain is a regulatory subunit. This Methanobrevibacter smithii (strain ATCC 35061 / DSM 861 / OCM 144 / PS) protein is A-type ATP synthase subunit B.